The sequence spans 455 residues: Gametocyte surface protein P45/48 (455 aa).

The first 30 residues, 1–30, serve as a signal peptide directing secretion; it reads MLYFFGNSRFFLFFFYFFFYFVLVIKSSVG. Residues 48-186 enclose the 6-Cys 1 domain; that stretch reads LGYKCDFSTE…ALVHVTVLKY (139 aa). Cystine bridges form between cysteine 52-cysteine 74 and cysteine 106-cysteine 160. N-linked (GlcNAc...) asparagine glycosylation is found at asparagine 135, asparagine 194, asparagine 275, and asparagine 307. Positions 302–433 constitute a 6-Cys 2 domain; the sequence is VIYGCNFSKD…ITGFMNIKIG (132 aa). Disulfide bonds link cysteine 306/cysteine 334, cysteine 351/cysteine 419, and cysteine 359/cysteine 417. Glycine 433 carries GPI-anchor amidated glycine lipidation. A propeptide spans 434–455 (removed in mature form); the sequence is SAYYAFLSKLFIIFIPLFFMWL.

Heterodimer; heterodimerizes with PF230.

The protein localises to the cell surface. Its subcellular location is the cell membrane. Its function is as follows. Gametocyte surface protein required for male fertility. The protein is Gametocyte surface protein P45/48 (PB45/48) of Plasmodium berghei (strain Anka).